The following is a 164-amino-acid chain: R-phycoerythrin alpha chain (164 aa).

(2R,3E)-phycoerythrobilin-binding residues include asparagine 47, lysine 81, cysteine 82, arginine 84, histidine 88, arginine 137, cysteine 139, and arginine 142.

It belongs to the phycobiliprotein family. In terms of assembly, heterododecamer of 6 alpha and 6 beta chains. The basic functional unit of phycobiliproteins is a ring-shaped hexamer formed from two back-to-back trimers contacting via the alpha chain subunits. The trimers are composed of alpha/beta subunit heterodimers arranged around a three-fold axis of symmetry. The phycoerythrins also contain a gamma subunit which is located in the center of the hexamer. Contains two covalently linked phycoerythrobilin chromophores.

The protein resides in the plastid. The protein localises to the chloroplast thylakoid membrane. Functionally, light-harvesting photosynthetic tetrapyrrole chromophore-protein from the phycobiliprotein complex. The sequence is that of R-phycoerythrin alpha chain (rpeA) from Agarophyton chilense (Red seaweed).